The chain runs to 332 residues: Casein kinase I isoform 2 (332 aa).

A Protein kinase domain is found at 11 to 282 (FRIGQKIGSG…YLKRLFRELF (272 aa)). ATP contacts are provided by residues 17–25 (IGSGSFGEI) and Lys40. Asp133 serves as the catalytic Proton acceptor. A disordered region spans residues 306-332 (EGRADQQQQQQQQQQRRGSEKEDEHPV). Low complexity predominate over residues 311 to 320 (QQQQQQQQQQ). Residues 322–332 (RGSEKEDEHPV) show a composition bias toward basic and acidic residues.

It belongs to the protein kinase superfamily. Ser/Thr protein kinase family. The cofactor is Mg(2+).

It catalyses the reaction L-seryl-[protein] + ATP = O-phospho-L-seryl-[protein] + ADP + H(+). It carries out the reaction L-threonyl-[protein] + ATP = O-phospho-L-threonyl-[protein] + ADP + H(+). Its function is as follows. Serine/threonine protein kinase. May phosphorylate ZC3H11 during unstressed conditions, leading to proteasome-dependent degradation of ZC3H11. The polypeptide is Casein kinase I isoform 2 (Trypanosoma brucei brucei).